The following is a 326-amino-acid chain: Methionine import ATP-binding protein MetN (326 aa).

In terms of domain architecture, ABC transporter spans 1–226; sequence MVFYTIGPQT…PQQPITRQFV (226 aa). 23–30 provides a ligand contact to ATP; sequence GYSGAGKS.

Belongs to the ABC transporter superfamily. Methionine importer (TC 3.A.1.24) family. The complex is composed of two ATP-binding proteins (MetN), two transmembrane proteins (MetI) and a solute-binding protein (MetQ).

Its subcellular location is the cell inner membrane. The catalysed reaction is L-methionine(out) + ATP + H2O = L-methionine(in) + ADP + phosphate + H(+). It carries out the reaction D-methionine(out) + ATP + H2O = D-methionine(in) + ADP + phosphate + H(+). In terms of biological role, part of the ABC transporter complex MetNIQ involved in methionine import. Responsible for energy coupling to the transport system. This is Methionine import ATP-binding protein MetN from Erwinia pyrifoliae (strain DSM 12162 / Ep1/96).